The sequence spans 148 residues: Transcription antitermination protein NusB (148 aa).

Belongs to the NusB family.

Involved in transcription antitermination. Required for transcription of ribosomal RNA (rRNA) genes. Binds specifically to the boxA antiterminator sequence of the ribosomal RNA (rrn) operons. This Aquifex aeolicus (strain VF5) protein is Transcription antitermination protein NusB.